The chain runs to 520 residues: ADP,ATP carrier protein 4 (520 aa).

12 helical membrane-spanning segments follow: residues 43-63 (LSKFLFITLLMFCILFIQNLI), 80-100 (ISFLKFWGVMPCAFLMTAIYV), 111-131 (IFYLIISIFLAFFALFAYVIF), 166-186 (FSLFYIIAELWPNVAFALLFW), 201-221 (FYPLFGLLSQTGIYLAGQFLE), 240-260 (FHTLSVQIILTIVLILGIVGI), 305-325 (LIATLLICYGIAINLVEGPWK), 339-359 (AAFIGNYLSYTGAFTILFVVL), 370-390 (FTAAIITPIIVFTTGILFFAV), 399-419 (LIVASFILTDPALIAITIGAI), 462-482 (LGKSGSAFLQSLVFIILPSAS), and 485-505 (SISVCLMFIFIITCLIWFWAV).

This sequence belongs to the ADP/ATP translocase tlc family.

It is found in the cell membrane. In terms of biological role, provides the rickettsial cell with host ATP in exchange for rickettsial ADP. This is an obligate exchange system. This energy acquiring activity is an important component of rickettsial parasitism. The polypeptide is ADP,ATP carrier protein 4 (tlcD) (Rickettsia bellii (strain RML369-C)).